The chain runs to 574 residues: MEQNITNILIKKIEELTETIYDETIRLEEPPSISLGDYSTNISFKLAKLLKKSPMVIAEELTNLLISENIEGIKEIKAVNGYINFFIDYNLYSKSGIAKISSEKDKFGQGAPKNKKVIIEHTSANPNGPLHIGHSRNAIVGDSLKRIVEFAGYVVEAQYYVNDMGRQEAIVVYGLDKFELNEQQKPDHAIGEVYFKANQLLNENPEQEEEILKLMKKYEEASEKGEENELTNKFNYAVNYALSGFKETLNNLNIHHDKFVWESSYVKNGMVQKVIQTLKDTGKVEKDEVYRLDLSEFGIDKKLVLARLNGTSLYSTRDIAYHIDKMKNCDIGINILGADHKLTAEMVNASLKLLGYNTPEVVFYEFISLPEGSMSTRRGTFISIDELYEEAKNRAVKEIKKRNETTEEEEINNIAHKIAVGAVRYNIVRISPDKAMVFRWDDALDFEKVGAPVIQYAHARCCRILEKENTNENKPIDATELFEYDLNEHEKLLIKILLKFPKIVEKSADAKKPQIMATYALDVAQTFNRYYANCPIFKEENKNIVYSRLELVKCTKTIIENALNLLGIECPGKM.

Residues 124–134 carry the 'HIGH' region motif; the sequence is ANPNGPLHIGH.

This sequence belongs to the class-I aminoacyl-tRNA synthetase family.

Its subcellular location is the cytoplasm. The enzyme catalyses tRNA(Arg) + L-arginine + ATP = L-arginyl-tRNA(Arg) + AMP + diphosphate. This Methanococcus aeolicus (strain ATCC BAA-1280 / DSM 17508 / OCM 812 / Nankai-3) protein is Arginine--tRNA ligase.